Reading from the N-terminus, the 139-residue chain is ATP synthase epsilon chain 2 (139 aa).

This sequence belongs to the ATPase epsilon chain family. F-type ATPases have 2 components, CF(1) - the catalytic core - and CF(0) - the membrane proton channel. CF(1) has five subunits: alpha(3), beta(3), gamma(1), delta(1), epsilon(1). CF(0) has three main subunits: a, b and c.

The protein localises to the cell inner membrane. Its function is as follows. Produces ATP from ADP in the presence of a proton gradient across the membrane. This is ATP synthase epsilon chain 2 from Paraburkholderia xenovorans (strain LB400).